The following is a 1001-amino-acid chain: TonB-dependent receptor P3 (1001 aa).

The first 26 residues, 1 to 26, serve as a signal peptide directing secretion; it reads MTTKNNKQLKSVLFMFLLLIGAYVKA. Positions 109-116 match the TonB box motif; it reads EEIVVIGY. Residues 120–232 enclose the TBDR plug domain; sequence KKSDVSGSVS…ANGVIMVTTK (113 aa). Residues 238–1001 enclose the TBDR beta-barrel domain; it reads KPTLELNTSY…TFTMGLNMKF (764 aa). Positions 984–1001 match the TonB C-terminal box motif; that stretch reads YGSYPNVRTFTMGLNMKF.

Belongs to the TonB-dependent receptor family.

It localises to the cell outer membrane. Its function is as follows. TonB-dependent receptor probably involved in ulvan degradation. Ulvan is the main polysaccharide component of the Ulvales (green seaweed) cell wall. It is composed of disaccharide building blocks comprising 3-sulfated rhamnose (Rha3S) linked to D-glucuronic acid (GlcA), L-iduronic acid (IduA), or D-xylose (Xyl). The TonB-dependent receptor may mediate transport of ulvan oligosaccharides from the surface of the outer membrane to the periplasm for subsequent degradation. The sequence is that of TonB-dependent receptor P3 from Formosa agariphila (strain DSM 15362 / KCTC 12365 / LMG 23005 / KMM 3901 / M-2Alg 35-1).